A 197-amino-acid chain; its full sequence is Putative peptidyl-prolyl cis-trans isomerase (197 aa).

Residues 14-195 (GEIKVVMHTN…HDVVIESIDV (182 aa)) enclose the PPIase cyclophilin-type domain.

The protein belongs to the cyclophilin-type PPIase family.

It catalyses the reaction [protein]-peptidylproline (omega=180) = [protein]-peptidylproline (omega=0). In terms of biological role, PPIases accelerate the folding of proteins. It catalyzes the cis-trans isomerization of proline imidic peptide bonds in oligopeptides. The sequence is that of Putative peptidyl-prolyl cis-trans isomerase from Staphylococcus aureus (strain bovine RF122 / ET3-1).